Here is a 71-residue protein sequence, read N- to C-terminus: Biotinylated protein TB7.3 (71 aa).

The Biotinyl-binding domain occupies 2–71 (AEDVRAEIVA…QAGDLIAVIS (70 aa)). Lys37 is modified (N6-biotinyllysine).

The protein is Biotinylated protein TB7.3 of Mycobacterium bovis (strain ATCC BAA-935 / AF2122/97).